The chain runs to 618 residues: 1-deoxy-D-xylulose-5-phosphate synthase (618 aa).

Thiamine diphosphate is bound by residues histidine 77 and glycine 118 to serine 120. Position 149 (aspartate 149) interacts with Mg(2+). Thiamine diphosphate is bound by residues glycine 150–alanine 151, asparagine 178, tyrosine 285, and glutamate 367. Mg(2+) is bound at residue asparagine 178.

The protein belongs to the transketolase family. DXPS subfamily. As to quaternary structure, homodimer. It depends on Mg(2+) as a cofactor. Thiamine diphosphate is required as a cofactor.

The enzyme catalyses D-glyceraldehyde 3-phosphate + pyruvate + H(+) = 1-deoxy-D-xylulose 5-phosphate + CO2. It participates in metabolic intermediate biosynthesis; 1-deoxy-D-xylulose 5-phosphate biosynthesis; 1-deoxy-D-xylulose 5-phosphate from D-glyceraldehyde 3-phosphate and pyruvate: step 1/1. Catalyzes the acyloin condensation reaction between C atoms 2 and 3 of pyruvate and glyceraldehyde 3-phosphate to yield 1-deoxy-D-xylulose-5-phosphate (DXP). This is 1-deoxy-D-xylulose-5-phosphate synthase from Idiomarina loihiensis (strain ATCC BAA-735 / DSM 15497 / L2-TR).